The primary structure comprises 129 residues: L-ectoine synthase (129 aa).

Belongs to the ectoine synthase family.

The catalysed reaction is (2S)-4-acetamido-2-aminobutanoate = L-ectoine + H2O. Its pathway is amine and polyamine biosynthesis; ectoine biosynthesis; L-ectoine from L-aspartate 4-semialdehyde: step 3/3. In terms of biological role, catalyzes the circularization of gamma-N-acetyl-alpha,gamma-diaminobutyric acid (ADABA) to ectoine (1,4,5,6-tetrahydro-2-methyl-4-pyrimidine carboxylic acid), which is an excellent osmoprotectant. In Halalkalibacterium halodurans (strain ATCC BAA-125 / DSM 18197 / FERM 7344 / JCM 9153 / C-125) (Bacillus halodurans), this protein is L-ectoine synthase.